We begin with the raw amino-acid sequence, 116 residues long: MFRSFMLAFQKACRQVHKQYLNKYYSVITYFLAFLTKFAILLESFTPFVSTPPLTSTPITPFNLSASPTFSGVSPPANIKCKLSGLSCLPTQSEIEFQSKSSPVPPASESNKGINE.

The helical transmembrane segment at 20–42 (YLNKYYSVITYFLAFLTKFAILL) threads the bilayer. Residues 95–116 (IEFQSKSSPVPPASESNKGINE) form a disordered region.

It is found in the membrane. This is an uncharacterized protein from Saccharomyces cerevisiae (strain ATCC 204508 / S288c) (Baker's yeast).